The following is a 121-amino-acid chain: Met-lysine-1a (121 aa).

An N-terminal signal peptide occupies residues 1-22; it reads MKSFVFALALIVAFACISESKS. Residues 23–69 constitute a propeptide that is removed on maturation; the sequence is DHTGYEEEENLEDSELTDLVTAALLEELAEASEMDDLSYTEEAGGER. Residue methionine 120 is modified to Methionine amide.

Expressed by the venom gland.

It is found in the secreted. Shows no antimicrobial activity against Gram-positive bacterium B.subtilis B-501 or Gram-negative bacterium E.coli DH5-alpha at concentrations up to 20 ug/ml. Shows no toxicity towards insect (S.carnaria) larvae. In Lachesana tarabaevi (Spider), this protein is Met-lysine-1a.